A 465-amino-acid polypeptide reads, in one-letter code: Coumaroyl-CoA:anthocyanidin 3-O-glucoside-6''-O-coumaroyltransferase 2 (465 aa).

Met1 carries the post-translational modification N-acetylmethionine. Catalysis depends on proton acceptor residues His173 and Asp406.

It belongs to the plant acyltransferase family. Highly expressed in flowers, and leaves. Lower levels of expression in stems, roots and siliques.

In terms of biological role, involved in the acylation of the 6'' position of the 3-O-glucose residue of anthocyanin. Also able to use flavonol 3-glucosides as the acyl acceptor. This Arabidopsis thaliana (Mouse-ear cress) protein is Coumaroyl-CoA:anthocyanidin 3-O-glucoside-6''-O-coumaroyltransferase 2 (3AT2).